The primary structure comprises 203 residues: Early nodulin-like protein 9 (203 aa).

Positions 1 to 27 are cleaved as a signal peptide; sequence MARNLKSMMLCGFGLLCFLMIVDRAYA. The 103-residue stretch at 28–130 folds into the Phytocyanin domain; that stretch reads REFTVGGATG…NEKLVVIVMA (103 aa). An intrachain disulfide couples Cys-84 to Cys-118. An N-linked (GlcNAc...) asparagine glycan is attached at Asn-103. Positions 134 to 181 are disordered; it reads GNKNTASSPPSPAPAPSGESAPSPPVSGTFEMTPAPTPTTSEDTPNSA. Ser-180 carries GPI-anchor amidated serine lipidation. Residues 181–203 constitute a propeptide, removed in mature form; sequence AASSLSFVAALLGAALASTLFLH.

Belongs to the early nodulin-like (ENODL) family. In terms of tissue distribution, specifically observed at the plasma membrane of sieve elements in vascular tissues of leaves, stems, roots, flowers and reproductive organs. Absent from companion cells.

It localises to the cell membrane. Its function is as follows. May act as a carbohydrate transporter. Mainly required for reproductive functions. This chain is Early nodulin-like protein 9, found in Arabidopsis thaliana (Mouse-ear cress).